Consider the following 142-residue polypeptide: Hemoglobin subunit alpha (142 aa).

A Globin domain is found at 2 to 142; it reads VLSAADKTNV…LSTVLTSKYR (141 aa). Serine 4 carries the post-translational modification Phosphoserine. An N6-succinyllysine modification is found at lysine 8. Threonine 9 carries the phosphothreonine modification. At lysine 12 the chain carries N6-succinyllysine. N6-acetyllysine; alternate is present on lysine 17. An N6-succinyllysine; alternate modification is found at lysine 17. Tyrosine 25 carries the post-translational modification Phosphotyrosine. Phosphoserine is present on serine 36. N6-succinyllysine is present on lysine 41. At serine 50 the chain carries Phosphoserine. Residue glutamine 59 coordinates O2. Histidine 88 lines the heme b pocket. Residue threonine 109 is modified to Phosphothreonine. The residue at position 125 (serine 125) is a Phosphoserine. 2 positions are modified to phosphothreonine: threonine 135 and threonine 138. The residue at position 139 (serine 139) is a Phosphoserine.

It belongs to the globin family. As to quaternary structure, heterotetramer of two alpha chains and two beta chains. Red blood cells.

In terms of biological role, involved in oxygen transport from the lung to the various peripheral tissues. Its function is as follows. Hemopressin acts as an antagonist peptide of the cannabinoid receptor CNR1. Hemopressin-binding efficiently blocks cannabinoid receptor CNR1 and subsequent signaling. The protein is Hemoglobin subunit alpha (HBA) of Monodelphis domestica (Gray short-tailed opossum).